The sequence spans 164 residues: Ribosomal RNA large subunit methyltransferase H (164 aa).

S-adenosyl-L-methionine is bound at residue G109.

Belongs to the RNA methyltransferase RlmH family. In terms of assembly, homodimer.

It is found in the cytoplasm. It carries out the reaction pseudouridine(1915) in 23S rRNA + S-adenosyl-L-methionine = N(3)-methylpseudouridine(1915) in 23S rRNA + S-adenosyl-L-homocysteine + H(+). Specifically methylates the pseudouridine at position 1915 (m3Psi1915) in 23S rRNA. The chain is Ribosomal RNA large subunit methyltransferase H from Methylobacterium radiotolerans (strain ATCC 27329 / DSM 1819 / JCM 2831 / NBRC 15690 / NCIMB 10815 / 0-1).